A 397-amino-acid chain; its full sequence is Acetate kinase 1 (397 aa).

N8 contacts Mg(2+). Residue K15 coordinates ATP. Substrate is bound at residue R89. The active-site Proton donor/acceptor is the D146. ATP is bound by residues 206–210 (HLGNG), 281–283 (DLR), and 329–333 (GIGEN). Residue E382 coordinates Mg(2+).

It belongs to the acetokinase family. Homodimer. Mg(2+) is required as a cofactor. The cofactor is Mn(2+).

The protein localises to the cytoplasm. The catalysed reaction is acetate + ATP = acetyl phosphate + ADP. It functions in the pathway metabolic intermediate biosynthesis; acetyl-CoA biosynthesis; acetyl-CoA from acetate: step 1/2. Functionally, catalyzes the formation of acetyl phosphate from acetate and ATP. Can also catalyze the reverse reaction. The protein is Acetate kinase 1 of Listeria innocua serovar 6a (strain ATCC BAA-680 / CLIP 11262).